A 311-amino-acid chain; its full sequence is Putative dihydroorotate dehydrogenase A (fumarate) (311 aa).

Substrate contacts are provided by residues K45, 69 to 73, and N128; that span reads NSMGL. An FMN-binding site is contributed by 45-46; it reads KT. FMN is bound at residue N128. The active-site Nucleophile is the C131. FMN-binding residues include K165 and V193. 194-195 provides a ligand contact to substrate; sequence NS. Residues G220, 248–249, and 270–271 contribute to the FMN site; these read GG and GT.

This sequence belongs to the dihydroorotate dehydrogenase family. Type 1 subfamily. Homodimer. It depends on FMN as a cofactor.

The protein resides in the cytoplasm. The catalysed reaction is (S)-dihydroorotate + fumarate = orotate + succinate. It participates in pyrimidine metabolism; UMP biosynthesis via de novo pathway. In terms of biological role, catalyzes the conversion of dihydroorotate to orotate with fumarate as the electron acceptor. In Streptococcus uberis (strain ATCC BAA-854 / 0140J), this protein is Putative dihydroorotate dehydrogenase A (fumarate) (pyrD).